The chain runs to 174 residues: Gamma-crystallin D (174 aa).

2 Beta/gamma crystallin 'Greek key' domains span residues 2–40 (GKIT…RVDS) and 41–83 (GCWM…RIIP). A connecting peptide region spans residues 84 to 87 (YSGS). 2 Beta/gamma crystallin 'Greek key' domains span residues 88-128 (HKMR…NVLD) and 129-171 (GCWI…RRVI).

Belongs to the beta/gamma-crystallin family. In terms of assembly, monomer.

Crystallins are the dominant structural components of the vertebrate eye lens. The protein is Gamma-crystallin D (CRYGD) of Macropus fuliginosus (Western gray kangaroo).